Reading from the N-terminus, the 88-residue chain is RNA-binding protein Hfq (88 aa).

The Sm domain occupies 9–68; the sequence is DPFLNALRRERIPVSIYLVNGIKLQGQIESFDQFVILLKNTVNQMVYKHAISTVVPARAV. The tract at residues 66–88 is disordered; it reads RAVSHHSGEQQRAPSDRPEKTED. Positions 71–88 are enriched in basic and acidic residues; it reads HSGEQQRAPSDRPEKTED.

It belongs to the Hfq family. Homohexamer.

In terms of biological role, RNA chaperone that binds small regulatory RNA (sRNAs) and mRNAs to facilitate mRNA translational regulation in response to envelope stress, environmental stress and changes in metabolite concentrations. Also binds with high specificity to tRNAs. This Vibrio atlanticus (strain LGP32) (Vibrio splendidus (strain Mel32)) protein is RNA-binding protein Hfq.